A 357-amino-acid chain; its full sequence is uncharacterized protein (357 aa).

The stretch at 173 to 211 is one HEAT repeat; it reads VLPILEKLMQDESLYVRKSVANNLNDISKTHPHLLRKVA.

This is an uncharacterized protein from Bacillus subtilis (strain 168).